Reading from the N-terminus, the 231-residue chain is Orotidine 5'-phosphate decarboxylase (231 aa).

Residues Asp11, Lys33, 60–69 (DLKFHDIPNT), Thr120, Arg181, Gln190, Gly210, and Arg211 contribute to the substrate site. The Proton donor role is filled by Lys62.

This sequence belongs to the OMP decarboxylase family. Type 1 subfamily. As to quaternary structure, homodimer.

The enzyme catalyses orotidine 5'-phosphate + H(+) = UMP + CO2. Its pathway is pyrimidine metabolism; UMP biosynthesis via de novo pathway; UMP from orotate: step 2/2. Its function is as follows. Catalyzes the decarboxylation of orotidine 5'-monophosphate (OMP) to uridine 5'-monophosphate (UMP). The chain is Orotidine 5'-phosphate decarboxylase from Vibrio atlanticus (strain LGP32) (Vibrio splendidus (strain Mel32)).